We begin with the raw amino-acid sequence, 121 residues long: LSM complex subunit lsm4 (121 aa).

Positions Leu-2 to Val-75 constitute a Sm domain. Residues Gln-82–Met-121 are disordered. The segment covering Pro-110–Met-121 has biased composition (basic residues).

It belongs to the snRNP Sm proteins family. Component of the heptameric LSM1-LSM7 complex that forms a seven-membered ring structure with a donut shape. The LSm subunits are arranged in the order lsm1, lsm2, lsm3, lsm6, lsm5, lsm7 and lsm4. Component of the heptameric LSM2-LSM8 complex that forms a seven-membered ring structure with a donut shape. The LSm subunits are arranged in the order lsm8, lsm2, lsm3, lsm6, lsm5, lsm7 and lsm4.

It localises to the nucleus. The protein resides in the cytoplasm. Functionally, component of LSm protein complexes, which are involved in RNA processing and may function in a chaperone-like manner. Component of the cytoplasmic LSM1-LSM7 complex which is involved in mRNA degradation by activating the decapping step. The LSM1-LSM7 complex loads onto the 3'-end of single stranded RNA. Component of the nuclear LSM2-LSM8 complex, which is involved in spliceosome assembly. The LSM2-LSM8 complex plays a role in the biogenesis of the spliceosomal U4/U6-U5 tri-snRNP complex by accelerating prp24-mediated annealing of U4/U6 di-snRNA. The LSM2-LSM8 complex binds U6 snRNA terminating with a cyclic 2',3' phosphate group; RNA with an unmodified 3' hydroxyl or non-cyclic 3' phosphate is bound less tightly. The chain is LSM complex subunit lsm4 (lsm4) from Schizosaccharomyces pombe (strain 972 / ATCC 24843) (Fission yeast).